We begin with the raw amino-acid sequence, 763 residues long: Phosphoglycerol transferase I (763 aa).

A run of 4 helical transmembrane segments spans residues 1–21 (MSEL…AWKA), 26–46 (WWFA…ITLY), 77–97 (ILPG…LGWV), and 108–128 (VGYS…SPAF).

This sequence belongs to the OpgB family.

The protein resides in the cell inner membrane. It carries out the reaction a phosphatidylglycerol + a membrane-derived-oligosaccharide D-glucose = a 1,2-diacyl-sn-glycerol + a membrane-derived-oligosaccharide 6-(glycerophospho)-D-glucose.. Its pathway is glycan metabolism; osmoregulated periplasmic glucan (OPG) biosynthesis. In terms of biological role, transfers a phosphoglycerol residue from phosphatidylglycerol to the membrane-bound nascent glucan backbones. In Salmonella heidelberg (strain SL476), this protein is Phosphoglycerol transferase I.